Consider the following 87-residue polypeptide: MSERNDRKVYVGRVVSDKMDKTITVLVETYKTHKLYGKRVKYSKKYKTHDENNSAKLGDIVKIQETRPLSATKRFRLVEIVEESVII.

Belongs to the universal ribosomal protein uS17 family. Part of the 30S ribosomal subunit.

One of the primary rRNA binding proteins, it binds specifically to the 5'-end of 16S ribosomal RNA. The protein is Small ribosomal subunit protein uS17 of Staphylococcus carnosus (strain TM300).